A 528-amino-acid polypeptide reads, in one-letter code: Probable protein phosphatase 2C 51 (528 aa).

Residues 8-28 (SLLNLGLLIIFFVFFFLVINC) form a helical membrane-spanning segment. The PPM-type phosphatase domain occupies 71–445 (RCHTAAIQGR…DNMAAVVVPL (375 aa)). Mn(2+) is bound by residues Asp117, Gly118, Asp385, and Asp436.

Belongs to the PP2C family. Mg(2+) is required as a cofactor. Requires Mn(2+) as cofactor.

Its subcellular location is the membrane. It catalyses the reaction O-phospho-L-seryl-[protein] + H2O = L-seryl-[protein] + phosphate. The enzyme catalyses O-phospho-L-threonyl-[protein] + H2O = L-threonyl-[protein] + phosphate. The sequence is that of Probable protein phosphatase 2C 51 from Arabidopsis thaliana (Mouse-ear cress).